Reading from the N-terminus, the 150-residue chain is Large ribosomal subunit protein bL9 (150 aa).

This sequence belongs to the bacterial ribosomal protein bL9 family.

Its function is as follows. Binds to the 23S rRNA. The sequence is that of Large ribosomal subunit protein bL9 from Yersinia enterocolitica serotype O:8 / biotype 1B (strain NCTC 13174 / 8081).